We begin with the raw amino-acid sequence, 126 residues long: Fluoride-specific ion channel FluC (126 aa).

A run of 4 helical transmembrane segments spans residues I5–V25, V37–A57, L65–L85, and L101–A121. Na(+)-binding residues include G75 and T78.

This sequence belongs to the fluoride channel Fluc/FEX (TC 1.A.43) family.

It is found in the cell inner membrane. The catalysed reaction is fluoride(in) = fluoride(out). With respect to regulation, na(+) is not transported, but it plays an essential structural role and its presence is essential for fluoride channel function. Its function is as follows. Fluoride-specific ion channel. Important for reducing fluoride concentration in the cell, thus reducing its toxicity. The chain is Fluoride-specific ion channel FluC from Roseobacter denitrificans (strain ATCC 33942 / OCh 114) (Erythrobacter sp. (strain OCh 114)).